The chain runs to 72 residues: MDLWVVILVGVLALLAGVALGFFIARKYMMNYLKKNPPINEQMLRMMMMQMGMKPSQKKINQMMKAMENQTK.

The helical transmembrane segment at 4 to 24 (WVVILVGVLALLAGVALGFFI) threads the bilayer.

It belongs to the UPF0154 family.

The protein localises to the cell membrane. This chain is UPF0154 protein BLi02038/BL02936, found in Bacillus licheniformis (strain ATCC 14580 / DSM 13 / JCM 2505 / CCUG 7422 / NBRC 12200 / NCIMB 9375 / NCTC 10341 / NRRL NRS-1264 / Gibson 46).